Here is a 201-residue protein sequence, read N- to C-terminus: Phosphoheptose isomerase 2 (201 aa).

Residues 39–198 (VIKAYKNGNK…EEELFGKGFS (160 aa)) form the SIS domain. 54-56 (NGG) lines the substrate pocket. Zn(2+) is bound by residues His63 and Glu67. Substrate-binding positions include Glu67, 96-97 (ND), 122-124 (STS), Ser127, and Gln174. Residues Gln174 and His182 each contribute to the Zn(2+) site.

This sequence belongs to the SIS family. GmhA subfamily. As to quaternary structure, homotetramer. The cofactor is Zn(2+).

Its subcellular location is the cytoplasm. It catalyses the reaction 2 D-sedoheptulose 7-phosphate = D-glycero-alpha-D-manno-heptose 7-phosphate + D-glycero-beta-D-manno-heptose 7-phosphate. It functions in the pathway carbohydrate biosynthesis; D-glycero-D-manno-heptose 7-phosphate biosynthesis; D-glycero-alpha-D-manno-heptose 7-phosphate and D-glycero-beta-D-manno-heptose 7-phosphate from sedoheptulose 7-phosphate: step 1/1. It participates in capsule biogenesis; capsule polysaccharide biosynthesis. Its function is as follows. Catalyzes the isomerization of sedoheptulose 7-phosphate in D-glycero-D-manno-heptose 7-phosphate. No activity with L-galacto-heptulose, L-galacto-heptulose 7-phosphate or D-manno-heptulose. In Campylobacter jejuni subsp. jejuni serotype O:2 (strain ATCC 700819 / NCTC 11168), this protein is Phosphoheptose isomerase 2.